The chain runs to 388 residues: Chorismate synthase (388 aa).

Arginine 39 and arginine 45 together coordinate NADP(+). Residues 130-132 (RSS), 251-252 (NA), glycine 296, 311-315 (KPIPT), and arginine 337 contribute to the FMN site.

This sequence belongs to the chorismate synthase family. As to quaternary structure, homotetramer. FMNH2 serves as cofactor.

It carries out the reaction 5-O-(1-carboxyvinyl)-3-phosphoshikimate = chorismate + phosphate. Its pathway is metabolic intermediate biosynthesis; chorismate biosynthesis; chorismate from D-erythrose 4-phosphate and phosphoenolpyruvate: step 7/7. In terms of biological role, catalyzes the anti-1,4-elimination of the C-3 phosphate and the C-6 proR hydrogen from 5-enolpyruvylshikimate-3-phosphate (EPSP) to yield chorismate, which is the branch point compound that serves as the starting substrate for the three terminal pathways of aromatic amino acid biosynthesis. This reaction introduces a second double bond into the aromatic ring system. In Streptococcus suis (strain 98HAH33), this protein is Chorismate synthase.